A 434-amino-acid polypeptide reads, in one-letter code: UDP-glucuronate 4-epimerase 2 (434 aa).

2 helical membrane-spanning segments follow: residues 32–52 (SVAK…IFFY) and 91–111 (GVSV…SAAL). NAD(+) is bound at residue 93–124 (SVLVTGAAGFVGTHVSAALKRRGDGVLGLDNF). The active-site Proton acceptor is the Tyr243.

Belongs to the NAD(P)-dependent epimerase/dehydratase family. As to quaternary structure, homodimer. As to expression, in roots, leaves, siliques, flowers, pollen and stems.

Its subcellular location is the golgi apparatus. It is found in the golgi stack membrane. The catalysed reaction is UDP-alpha-D-glucuronate = UDP-alpha-D-galacturonate. Involved in the synthesis of the negatively charged monosaccharide that forms the backbone of pectic cell wall components. The protein is UDP-glucuronate 4-epimerase 2 (GAE2) of Arabidopsis thaliana (Mouse-ear cress).